A 353-amino-acid chain; its full sequence is UDP-N-acetylglucosamine--N-acetylmuramyl-(pentapeptide) pyrophosphoryl-undecaprenol N-acetylglucosamine transferase (353 aa).

Residues 10–12 (TGG), N124, S183, and Q283 each bind UDP-N-acetyl-alpha-D-glucosamine.

This sequence belongs to the glycosyltransferase 28 family. MurG subfamily.

It localises to the cell inner membrane. It carries out the reaction di-trans,octa-cis-undecaprenyl diphospho-N-acetyl-alpha-D-muramoyl-L-alanyl-D-glutamyl-meso-2,6-diaminopimeloyl-D-alanyl-D-alanine + UDP-N-acetyl-alpha-D-glucosamine = di-trans,octa-cis-undecaprenyl diphospho-[N-acetyl-alpha-D-glucosaminyl-(1-&gt;4)]-N-acetyl-alpha-D-muramoyl-L-alanyl-D-glutamyl-meso-2,6-diaminopimeloyl-D-alanyl-D-alanine + UDP + H(+). It functions in the pathway cell wall biogenesis; peptidoglycan biosynthesis. Functionally, cell wall formation. Catalyzes the transfer of a GlcNAc subunit on undecaprenyl-pyrophosphoryl-MurNAc-pentapeptide (lipid intermediate I) to form undecaprenyl-pyrophosphoryl-MurNAc-(pentapeptide)GlcNAc (lipid intermediate II). This is UDP-N-acetylglucosamine--N-acetylmuramyl-(pentapeptide) pyrophosphoryl-undecaprenol N-acetylglucosamine transferase from Helicobacter pylori (strain J99 / ATCC 700824) (Campylobacter pylori J99).